The primary structure comprises 370 residues: Histidinol-phosphate aminotransferase 2 (370 aa).

K230 bears the N6-(pyridoxal phosphate)lysine mark.

This sequence belongs to the class-II pyridoxal-phosphate-dependent aminotransferase family. Histidinol-phosphate aminotransferase subfamily. As to quaternary structure, homodimer. It depends on pyridoxal 5'-phosphate as a cofactor.

It catalyses the reaction L-histidinol phosphate + 2-oxoglutarate = 3-(imidazol-4-yl)-2-oxopropyl phosphate + L-glutamate. It participates in amino-acid biosynthesis; L-histidine biosynthesis; L-histidine from 5-phospho-alpha-D-ribose 1-diphosphate: step 7/9. The chain is Histidinol-phosphate aminotransferase 2 from Pseudomonas fluorescens (strain ATCC BAA-477 / NRRL B-23932 / Pf-5).